The primary structure comprises 175 residues: Co-chaperone protein HscB homolog (175 aa).

In terms of domain architecture, J spans 7 to 79; that stretch reads SHFDLFHLPA…LQRASYLLSL (73 aa).

The protein belongs to the HscB family. As to quaternary structure, interacts with HscA and stimulates its ATPase activity.

Functionally, co-chaperone involved in the maturation of iron-sulfur cluster-containing proteins. Seems to help targeting proteins to be folded toward HscA. The protein is Co-chaperone protein HscB homolog of Burkholderia vietnamiensis (strain G4 / LMG 22486) (Burkholderia cepacia (strain R1808)).